The following is a 152-amino-acid chain: UPF0178 protein SAR0734 (152 aa).

It belongs to the UPF0178 family.

This Staphylococcus aureus (strain MRSA252) protein is UPF0178 protein SAR0734.